The chain runs to 597 residues: Aspartate--tRNA(Asp/Asn) ligase (597 aa).

Glutamate 175 contributes to the L-aspartate binding site. An aspartate region spans residues glutamine 199 to lysine 202. Positions 221 and 454 each coordinate L-aspartate. An ATP-binding site is contributed by arginine 221 to glutamate 223. Glutamate 488 lines the ATP pocket. Residue arginine 495 participates in L-aspartate binding. Glycine 540–arginine 543 is an ATP binding site.

It belongs to the class-II aminoacyl-tRNA synthetase family. Type 1 subfamily. As to quaternary structure, homodimer.

Its subcellular location is the cytoplasm. It catalyses the reaction tRNA(Asx) + L-aspartate + ATP = L-aspartyl-tRNA(Asx) + AMP + diphosphate. Its function is as follows. Aspartyl-tRNA synthetase with relaxed tRNA specificity since it is able to aspartylate not only its cognate tRNA(Asp) but also tRNA(Asn). Reaction proceeds in two steps: L-aspartate is first activated by ATP to form Asp-AMP and then transferred to the acceptor end of tRNA(Asp/Asn). This chain is Aspartate--tRNA(Asp/Asn) ligase, found in Bartonella quintana (strain Toulouse) (Rochalimaea quintana).